The following is a 339-amino-acid chain: Phenylalanine--tRNA ligase alpha subunit (339 aa).

Glutamate 254 serves as a coordination point for Mg(2+).

This sequence belongs to the class-II aminoacyl-tRNA synthetase family. Phe-tRNA synthetase alpha subunit type 1 subfamily. In terms of assembly, tetramer of two alpha and two beta subunits. The cofactor is Mg(2+).

It is found in the cytoplasm. It carries out the reaction tRNA(Phe) + L-phenylalanine + ATP = L-phenylalanyl-tRNA(Phe) + AMP + diphosphate + H(+). The chain is Phenylalanine--tRNA ligase alpha subunit from Dictyoglomus thermophilum (strain ATCC 35947 / DSM 3960 / H-6-12).